The primary structure comprises 690 residues: CREB-H transcription factor homolog let-607 (690 aa).

Disordered stretches follow at residues 87–118 (NDNC…SSGG), 166–192 (SAVH…SNGL), and 205–253 (PASI…KYPP). Low complexity-rich tracts occupy residues 100-116 (SLPI…YHSS), 170-181 (QNQQQQQRRLNQ), and 213-236 (PSSS…SSST). The region spanning 284–347 (DLKRIRRKIR…QSVISQLKKL (64 aa)) is the bZIP domain. The segment at 286-321 (KRIRRKIRNKRSAQTSRKRKQDYIEQLEDRVSESTK) is basic motif. Residues 295–350 (KRSAQTSRKRKQDYIEQLEDRVSESTKENQALKQQIERLSSENQSVISQLKKLQAQ) adopt a coiled-coil conformation. The tract at residues 326-333 (LKQQIERL) is leucine-zipper. Polar residues predominate over residues 451-464 (HNNSKYPASGNQNH). Disordered stretches follow at residues 451-495 (HNNS…SMYR) and 509-536 (GARK…ATSP). 2 stretches are compositionally biased toward low complexity: residues 480–492 (QPKQ…HQPS) and 514–535 (SSTS…SATS).

It belongs to the bZIP family.

The protein resides in the nucleus. In terms of biological role, probable transcription factor, required during migration of the gonadal distal tip cells (DTC). Probably regulates cell adhesion of DTCs via modulation of expression of genes involved in integrin-mediated adhesion, including tln-1, src-1, and integrin pat-2. Modulates expression of genes involved in protein trafficking during embryogenesis, including emo-1, sec-61, calu-1, sec-24.1, enpl-1, sar-1 and tfg-1. This chain is CREB-H transcription factor homolog let-607, found in Caenorhabditis elegans.